The following is a 1038-amino-acid chain: Ribosome quality control complex subunit 2 (1038 aa).

Residues 350–383 (ALRIQNQESQAQKKIDDARAENDRKIQALLDVQE) are a coiled coil. 3 disordered regions span residues 459 to 499 (LNTS…MKRK), 708 to 824 (KTSG…DEPG), and 877 to 898 (QRKK…KREK). Residues 713–768 (EDNGDDDEEEEEEEEEEEEEEEEEEEEEEEEKEEEEKEEEQQQDEDDSNEVNGLEK) adopt a coiled-coil conformation. Residues 714 to 761 (DNGDDDEEEEEEEEEEEEEEEEEEEEEEEEKEEEEKEEEQQQDEDDSN) show a composition bias toward acidic residues. The segment covering 780–794 (SFEHDNLEKDIEKHC) has biased composition (basic and acidic residues). Polar residues predominate over residues 795 to 805 (TISSDTDSDSG). At Ser797 the chain carries Phosphoserine. A coiled-coil region spans residues 830-912 (IENINSNVRG…QALKFTKKEK (83 aa)). Residues 877–894 (QRKKEEIMKREVREDRKN) show a composition bias toward basic and acidic residues.

It belongs to the NEMF family. In terms of assembly, component of the ribosome quality control complex (RQC), composed of the E3 ubiquitin ligase RKR1/LTN1, RQC1 and RQC2, as well as CDC48 and its ubiquitin-binding cofactors associated with the 60S ribosomal subunit. RQC2 binds to the 40S-binding surface of tRNAs.

The protein localises to the cytoplasm. In terms of biological role, key component of the ribosome quality control complex (RQC), a ribosome-associated complex that mediates the extraction of incompletely synthesized nascent chains from stalled ribosomes as well as their ubiquitin-mediated proteasomal degradation. Thereby, frees 60S subunit ribosomes from the stalled translation complex and prevents the accumulation of nascent polypeptide chains that are potentially toxic for the cell. Within the RQC complex, RQC2 specifically binds stalled 60S ribosomal subunits by recognizing an exposed, nascent chain-conjugated tRNA moiety and promotes the recruitment of RKR1/LTN1 to stalled 60S subunits. Following binding to stalled 60S ribosomal subunits, RQC2 mediates CAT tailing by recruiting alanine- and threonine-charged tRNA to the A-site and directing the elongation of stalled nascent chains independently of mRNA or 40S subunits, leading to non-templated C-terminal Ala and Thr extensions (CAT tails). CAT tails promote the RKR1/LTN1-mediated ubiquitination of incompletely synthesized nascent polypeptides: CAT tailing facilitates RKR1/LTN1-dependent ubiquitination by exposing lysine residues that would otherwise remain buried in the ribosomal exit tunnel. Following ubiquitination, incompletely synthesized nascent polypeptides are recognized by CDC48 and degraded by the proteasome. CAT-tailed proteins tend to aggregate and sequester chaperones and can induce proteotoxic stress; their RKR1/LTN1-dependent ubiquitination and degradation is required to prevent proteotoxic stress. This Saccharomyces cerevisiae (strain ATCC 204508 / S288c) (Baker's yeast) protein is Ribosome quality control complex subunit 2.